We begin with the raw amino-acid sequence, 598 residues long: Elongation factor 4 (598 aa).

The region spanning 2 to 184 is the tr-type G domain; that stretch reads NNIRNFAIIA…AIVAKLPAPQ (183 aa). Residues 14 to 19 and 131 to 134 contribute to the GTP site; these read DHGKST and NKVD.

This sequence belongs to the TRAFAC class translation factor GTPase superfamily. Classic translation factor GTPase family. LepA subfamily.

The protein localises to the cell membrane. It carries out the reaction GTP + H2O = GDP + phosphate + H(+). Functionally, required for accurate and efficient protein synthesis under certain stress conditions. May act as a fidelity factor of the translation reaction, by catalyzing a one-codon backward translocation of tRNAs on improperly translocated ribosomes. Back-translocation proceeds from a post-translocation (POST) complex to a pre-translocation (PRE) complex, thus giving elongation factor G a second chance to translocate the tRNAs correctly. Binds to ribosomes in a GTP-dependent manner. The protein is Elongation factor 4 of Wolbachia sp. subsp. Drosophila simulans (strain wRi).